The primary structure comprises 188 residues: UPF0157 protein DR_2534 (188 aa).

Over residues 1 to 12 (MGRGGRGVGGGR) the composition is skewed to gly residues. The segment at 1 to 37 (MGRGGRGVGGGRPEGHGASVEGGRTRQTEGMDLISPD) is disordered.

It belongs to the UPF0157 (GrpB) family.

This is UPF0157 protein DR_2534 from Deinococcus radiodurans (strain ATCC 13939 / DSM 20539 / JCM 16871 / CCUG 27074 / LMG 4051 / NBRC 15346 / NCIMB 9279 / VKM B-1422 / R1).